The sequence spans 53 residues: Large ribosomal subunit protein bL33A (53 aa).

This sequence belongs to the bacterial ribosomal protein bL33 family.

This Mycoplasma genitalium (strain ATCC 33530 / DSM 19775 / NCTC 10195 / G37) (Mycoplasmoides genitalium) protein is Large ribosomal subunit protein bL33A (rpmG1).